A 121-amino-acid chain; its full sequence is Large ribosomal subunit protein uL14 (121 aa).

This sequence belongs to the universal ribosomal protein uL14 family. As to quaternary structure, part of the 50S ribosomal subunit. Forms a cluster with proteins L3 and L19. In the 70S ribosome, L14 and L19 interact and together make contacts with the 16S rRNA in bridges B5 and B8.

Its function is as follows. Binds to 23S rRNA. Forms part of two intersubunit bridges in the 70S ribosome. In Prochlorococcus marinus (strain MIT 9303), this protein is Large ribosomal subunit protein uL14.